A 131-amino-acid chain; its full sequence is ATP synthase epsilon chain, chloroplastic (131 aa).

This sequence belongs to the ATPase epsilon chain family. F-type ATPases have 2 components, CF(1) - the catalytic core - and CF(0) - the membrane proton channel. CF(1) has five subunits: alpha(3), beta(3), gamma(1), delta(1), epsilon(1). CF(0) has three main subunits: a, b and c.

It localises to the plastid. It is found in the chloroplast thylakoid membrane. Its function is as follows. Produces ATP from ADP in the presence of a proton gradient across the membrane. This Oltmannsiellopsis viridis (Marine flagellate) protein is ATP synthase epsilon chain, chloroplastic.